Reading from the N-terminus, the 455-residue chain is MKLKAIILAAGAGTRMKSKLPKVLHKVCGRTMLNHVIDVAKGSMVQECIVVVGHGAEDVKESLTPDVKTVLQKEQLGTGHALMMAEPYIDDGTILVLCGDGPLITEETLNRTVAYHREGNFKATVLTTDLANPKGLGRIVRNAEGQLEKIVEEKDATEEEKAIIEVNSGIYCFDGEILKEALPKLKNENAQKEYYLTDILSIIRNMGFGVGVYKLEEYEEIMAVNSREQLADVEAIMRRRIAKKHMANGVTIMNPEHVYIEKTVTIGADTILYPGVILTGNTVIGEDCIIGQNSRIEDTIIGDGVEVQSSTIIHSKVGNFTHIGPYAYLRPNSNIGEHVKIGDFVEVKNSNIGDHSKASHLAYIGDADVGQNVNIGCGVVFVNYDGKNKHRTTVEDNSFVGSNSNLIAPVTVKESGYVACGSTITKDVPEGSLAVARARQENKEGWTKRKGLLKK.

A pyrophosphorylase region spans residues 1–227 (MKLKAIILAA…YEEIMAVNSR (227 aa)). UDP-N-acetyl-alpha-D-glucosamine contacts are provided by residues 8 to 11 (LAAG), Lys22, Gln72, and 77 to 78 (GT). Residue Asp100 participates in Mg(2+) binding. Residues Gly137, Glu152, Asn167, and Asn225 each coordinate UDP-N-acetyl-alpha-D-glucosamine. Residue Asn225 participates in Mg(2+) binding. The segment at 228-248 (EQLADVEAIMRRRIAKKHMAN) is linker. Positions 249–455 (GVTIMNPEHV…WTKRKGLLKK (207 aa)) are N-acetyltransferase. 2 residues coordinate UDP-N-acetyl-alpha-D-glucosamine: Arg330 and Lys348. The Proton acceptor role is filled by His360. UDP-N-acetyl-alpha-D-glucosamine contacts are provided by Tyr363 and Asn374. Residues 383–384 (NY), Ser402, Cys420, and Arg437 each bind acetyl-CoA.

This sequence in the N-terminal section; belongs to the N-acetylglucosamine-1-phosphate uridyltransferase family. In the C-terminal section; belongs to the transferase hexapeptide repeat family. In terms of assembly, homotrimer. It depends on Mg(2+) as a cofactor.

The protein localises to the cytoplasm. It catalyses the reaction alpha-D-glucosamine 1-phosphate + acetyl-CoA = N-acetyl-alpha-D-glucosamine 1-phosphate + CoA + H(+). The enzyme catalyses N-acetyl-alpha-D-glucosamine 1-phosphate + UTP + H(+) = UDP-N-acetyl-alpha-D-glucosamine + diphosphate. The protein operates within nucleotide-sugar biosynthesis; UDP-N-acetyl-alpha-D-glucosamine biosynthesis; N-acetyl-alpha-D-glucosamine 1-phosphate from alpha-D-glucosamine 6-phosphate (route II): step 2/2. Its pathway is nucleotide-sugar biosynthesis; UDP-N-acetyl-alpha-D-glucosamine biosynthesis; UDP-N-acetyl-alpha-D-glucosamine from N-acetyl-alpha-D-glucosamine 1-phosphate: step 1/1. It participates in bacterial outer membrane biogenesis; LPS lipid A biosynthesis. Its function is as follows. Catalyzes the last two sequential reactions in the de novo biosynthetic pathway for UDP-N-acetylglucosamine (UDP-GlcNAc). The C-terminal domain catalyzes the transfer of acetyl group from acetyl coenzyme A to glucosamine-1-phosphate (GlcN-1-P) to produce N-acetylglucosamine-1-phosphate (GlcNAc-1-P), which is converted into UDP-GlcNAc by the transfer of uridine 5-monophosphate (from uridine 5-triphosphate), a reaction catalyzed by the N-terminal domain. In Alkaliphilus oremlandii (strain OhILAs) (Clostridium oremlandii (strain OhILAs)), this protein is Bifunctional protein GlmU.